The chain runs to 200 residues: Proteasome subunit beta 2 (200 aa).

Position 1 (methionine 1) is a propeptide, removed in mature form; by autocatalysis. Threonine 2 serves as the catalytic Nucleophile.

This sequence belongs to the peptidase T1B family. In terms of assembly, the 20S proteasome core is composed of 14 alpha and 14 beta subunits that assemble into four stacked heptameric rings, resulting in a barrel-shaped structure. The two inner rings, each composed of seven catalytic beta subunits, are sandwiched by two outer rings, each composed of seven alpha subunits. The catalytic chamber with the active sites is on the inside of the barrel. Has a gated structure, the ends of the cylinder being occluded by the N-termini of the alpha-subunits. Is capped at one or both ends by the proteasome regulatory ATPase, PAN.

The protein localises to the cytoplasm. The enzyme catalyses Cleavage of peptide bonds with very broad specificity.. The formation of the proteasomal ATPase PAN-20S proteasome complex, via the docking of the C-termini of PAN into the intersubunit pockets in the alpha-rings, triggers opening of the gate for substrate entry. Interconversion between the open-gate and close-gate conformations leads to a dynamic regulation of the 20S proteasome proteolysis activity. Functionally, component of the proteasome core, a large protease complex with broad specificity involved in protein degradation. This is Proteasome subunit beta 2 from Pyrobaculum islandicum (strain DSM 4184 / JCM 9189 / GEO3).